The chain runs to 223 residues: Deoxyribose-phosphate aldolase (223 aa).

Catalysis depends on Asp91, which acts as the Proton donor/acceptor. Lys153 serves as the catalytic Schiff-base intermediate with acetaldehyde. The active-site Proton donor/acceptor is Lys182.

This sequence belongs to the DeoC/FbaB aldolase family. DeoC type 1 subfamily.

It is found in the cytoplasm. The enzyme catalyses 2-deoxy-D-ribose 5-phosphate = D-glyceraldehyde 3-phosphate + acetaldehyde. It participates in carbohydrate degradation; 2-deoxy-D-ribose 1-phosphate degradation; D-glyceraldehyde 3-phosphate and acetaldehyde from 2-deoxy-alpha-D-ribose 1-phosphate: step 2/2. Functionally, catalyzes a reversible aldol reaction between acetaldehyde and D-glyceraldehyde 3-phosphate to generate 2-deoxy-D-ribose 5-phosphate. This chain is Deoxyribose-phosphate aldolase, found in Streptococcus pyogenes serotype M4 (strain MGAS10750).